Here is a 147-residue protein sequence, read N- to C-terminus: Nucleoside diphosphate kinase (147 aa).

ATP contacts are provided by lysine 11, phenylalanine 59, arginine 87, threonine 93, arginine 104, and asparagine 114. Histidine 117 (pros-phosphohistidine intermediate) is an active-site residue.

This sequence belongs to the NDK family. Homotetramer. The cofactor is Mg(2+).

It is found in the cytoplasm. It carries out the reaction a 2'-deoxyribonucleoside 5'-diphosphate + ATP = a 2'-deoxyribonucleoside 5'-triphosphate + ADP. It catalyses the reaction a ribonucleoside 5'-diphosphate + ATP = a ribonucleoside 5'-triphosphate + ADP. Functionally, major role in the synthesis of nucleoside triphosphates other than ATP. The ATP gamma phosphate is transferred to the NDP beta phosphate via a ping-pong mechanism, using a phosphorylated active-site intermediate. In Anaeromyxobacter dehalogenans (strain 2CP-C), this protein is Nucleoside diphosphate kinase.